The sequence spans 168 residues: SsrA-binding protein (168 aa).

The disordered stretch occupies residues 1–20; it reads MAAQSKQAKPSGKQGGKKII.

The protein belongs to the SmpB family.

The protein resides in the cytoplasm. Its function is as follows. Required for rescue of stalled ribosomes mediated by trans-translation. Binds to transfer-messenger RNA (tmRNA), required for stable association of tmRNA with ribosomes. tmRNA and SmpB together mimic tRNA shape, replacing the anticodon stem-loop with SmpB. tmRNA is encoded by the ssrA gene; the 2 termini fold to resemble tRNA(Ala) and it encodes a 'tag peptide', a short internal open reading frame. During trans-translation Ala-aminoacylated tmRNA acts like a tRNA, entering the A-site of stalled ribosomes, displacing the stalled mRNA. The ribosome then switches to translate the ORF on the tmRNA; the nascent peptide is terminated with the 'tag peptide' encoded by the tmRNA and targeted for degradation. The ribosome is freed to recommence translation, which seems to be the essential function of trans-translation. The sequence is that of SsrA-binding protein from Mycobacterium ulcerans (strain Agy99).